The sequence spans 205 residues: High frequency lysogenization protein HflD homolog (205 aa).

This sequence belongs to the HflD family.

The protein resides in the cytoplasm. It is found in the cell inner membrane. In Shewanella oneidensis (strain ATCC 700550 / JCM 31522 / CIP 106686 / LMG 19005 / NCIMB 14063 / MR-1), this protein is High frequency lysogenization protein HflD homolog.